Here is a 597-residue protein sequence, read N- to C-terminus: Lysine--tRNA ligase (597 aa).

Positions 501 and 508 each coordinate Mg(2+).

Belongs to the class-II aminoacyl-tRNA synthetase family. As to quaternary structure, homodimer. Mg(2+) is required as a cofactor.

It is found in the cytoplasm. The enzyme catalyses tRNA(Lys) + L-lysine + ATP = L-lysyl-tRNA(Lys) + AMP + diphosphate. The protein is Lysine--tRNA ligase (lysS) of Aquifex aeolicus (strain VF5).